The primary structure comprises 549 residues: Chaperonin GroEL (549 aa).

Residues 30–33 (TLGP), lysine 51, 87–91 (DGTTT), glycine 415, and aspartate 495 contribute to the ATP site.

It belongs to the chaperonin (HSP60) family. Forms a cylinder of 14 subunits composed of two heptameric rings stacked back-to-back. Interacts with the co-chaperonin GroES.

Its subcellular location is the cytoplasm. It catalyses the reaction ATP + H2O + a folded polypeptide = ADP + phosphate + an unfolded polypeptide.. Functionally, together with its co-chaperonin GroES, plays an essential role in assisting protein folding. The GroEL-GroES system forms a nano-cage that allows encapsulation of the non-native substrate proteins and provides a physical environment optimized to promote and accelerate protein folding. The sequence is that of Chaperonin GroEL from Hahella chejuensis (strain KCTC 2396).